The following is a 616-amino-acid chain: MFRYLSRTSTIYKGVIATSKTASTANVVAAQESRRNYANKRNNNRNGPADALDEKLNSILSGKTSSKRKPYGGRKSPVDETSPWYAQLCALDDCLTTTLKQSATPMRKLLSDRVNHPDMRSNPTFWHSVSRAMTLYNELKQCPEMTDQRVTSLVHLLHNGLRTDRQLVSSLNKKPDYDSQSFHKEMVNFIYTSLNEISDDILNNNVPINANGLMHLFTSYQEMGFTDLVVQIWKKIETIAEQNPQSNIGKISKHPNVVGIVLPILYEKEIVNFSEAEKLFKECEQYHNRMFPNLYVGMILTSLKANENMKALELFETLCTNSKGVHYGYISETHIAFISQCKDISVAESFLDKAVNNEMPYRVEIQVSAVNSLMYNIWSENQDFNKIKEIWQKMVTFYGENNLRLAIFSSLNNEFFSYFFEKYKENKTEGLEQLQKLITQYNNLKGIDEPFLNIILAKCTVWKEPEVIKYIEKNFELFNVPKSLITSRILLKSLGSIDNITKEQIVERWQEIVLKADSLGSKYIANADWAALRDATVKWAQENKDNQESLDRIEWYLQIVNVYQKYCRDGSQRYRILKGCSKSFPILAENLQRLDLVDTSSIPVCEVKSLKEALQN.

The N-terminal 37 residues, methionine 1–tyrosine 37, are a transit peptide targeting the mitochondrion. Disordered regions lie at residues arginine 34–aspartate 53 and leucine 60–aspartate 79.

Belongs to the RMD9 family. As to quaternary structure, monomer. Post-translationally, phosphorylated. Phosphorylation promotes binding to RNA.

The protein localises to the mitochondrion inner membrane. Its function is as follows. Binds the 3'-UTR of mitochondrial mRNAs. Involved in the processing or stability of mitochondrial mRNAs. This Candida glabrata (strain ATCC 2001 / BCRC 20586 / JCM 3761 / NBRC 0622 / NRRL Y-65 / CBS 138) (Yeast) protein is RNA-binding protein RMD9, mitochondrial (RMD9).